We begin with the raw amino-acid sequence, 208 residues long: Outer-membrane lipoprotein LolB (208 aa).

Residues 1-21 (MLSSKRRLMRLLPLASLLLTA) form the signal peptide. C22 is lipidated: N-palmitoyl cysteine. Residue C22 is the site of S-diacylglycerol cysteine attachment.

This sequence belongs to the LolB family. As to quaternary structure, monomer.

It localises to the cell outer membrane. Its function is as follows. Plays a critical role in the incorporation of lipoproteins in the outer membrane after they are released by the LolA protein. This is Outer-membrane lipoprotein LolB from Erwinia tasmaniensis (strain DSM 17950 / CFBP 7177 / CIP 109463 / NCPPB 4357 / Et1/99).